Reading from the N-terminus, the 588-residue chain is Transcriptional regulatory protein ASH1 (588 aa).

The residue at position 56 (serine 56) is a Phosphoserine. Disordered stretches follow at residues 85–109 (SNTAPASPHHMDYNPISSLTPGNSP), 377–398 (SNNSKSNVRKPSKNKISKQASN), and 417–495 (SSVS…TRHT). Residues 99–109 (PISSLTPGNSP) are compositionally biased toward polar residues. Basic residues predominate over residues 383-392 (NVRKPSKNKI). The span at 417–433 (SSVSASSSPSPSTPTKS) shows a compositional bias: low complexity. Position 465 is a phosphoserine (serine 465). Positions 470 to 493 (PRRSSNSSITKKGSRRSSGSSPTR) are enriched in low complexity. Residues 499 to 526 (CVSCHSSDSPCWRPSWSPRKQDQLCNSC) form a GATA-type; atypical zinc finger.

As to quaternary structure, component of the RPD3C(L) complex composed of at least ASH1, CTI6, DEP1, PHO23, RPD3, RXT2, RXT3, SAP30, SDS3, SIN3, UME1 and UME6.

Its subcellular location is the nucleus. In terms of biological role, component of the RPD3C(L) histone deacetylase complex (HDAC). Responsible for the deacetylation of lysine residues on the N-terminal part of the core histones (H2A, H2B, H3 and H4). Histone deacetylation gives a tag for epigenetic repression and plays an important role in transcriptional regulation, cell cycle progression and developmental events. ASH1 is necessary to repress HO in daughter cells to block mating-type switching through its binding to HO promoter 5'-YTGAT-3' sites. Also involved in pseudohyphal growth. This chain is Transcriptional regulatory protein ASH1 (ASH1), found in Saccharomyces cerevisiae (strain ATCC 204508 / S288c) (Baker's yeast).